Consider the following 433-residue polypeptide: Polygalacturonase ADPG2 (433 aa).

The N-terminal stretch at 1–24 (MARCTNLVTVFLLWALLMFSWCKA) is a signal peptide. PbH1 repeat units follow at residues 223 to 249 (CSNV…HITN), 250 to 271 (TQNI…SIES), 273 to 293 (SQNV…SIGS), 303 to 324 (VSGV…RIKT), and 332 to 353 (ASNI…IIDQ). Aspartate 264 serves as the catalytic Proton donor. Histidine 287 is a catalytic residue.

The protein belongs to the glycosyl hydrolase 28 family. Expressed in roots and in the abscission zone of the sepals, petals and stamens of flowers, at the base of cauline leaves and in the basal cell of trichomes from senescing leaves. Found at the site of lateral root emergence, in the dehiscence zone of anthers and maturing siliques. Also expressed early in anther development, at the time of microspore separation. Expressed in germinating seeds, at the point at which the radicle broke through the seed coat. Not expressed at the junction between the seed and the funiculus or in the dehiscence zone of anthers or pods.

It is found in the secreted. The protein localises to the cell wall. It carries out the reaction (1,4-alpha-D-galacturonosyl)n+m + H2O = (1,4-alpha-D-galacturonosyl)n + (1,4-alpha-D-galacturonosyl)m.. Its function is as follows. Polygalacturonase involved in cell separation in the final stages of pod shatter, in anther dehiscence and in floral organ abscission. The polypeptide is Polygalacturonase ADPG2 (ADPG2) (Arabidopsis thaliana (Mouse-ear cress)).